Here is an 878-residue protein sequence, read N- to C-terminus: Phosphoenolpyruvate carboxylase (878 aa).

Active-site residues include His140 and Lys545.

Belongs to the PEPCase type 1 family. The cofactor is Mg(2+).

It catalyses the reaction oxaloacetate + phosphate = phosphoenolpyruvate + hydrogencarbonate. Its function is as follows. Forms oxaloacetate, a four-carbon dicarboxylic acid source for the tricarboxylic acid cycle. The polypeptide is Phosphoenolpyruvate carboxylase (Pseudomonas syringae pv. tomato (strain ATCC BAA-871 / DC3000)).